The primary structure comprises 49 residues: uncharacterized protein (49 aa).

Residues 22–42 (AIVGISIMIIIAIGIYLIIEY) form a helical membrane-spanning segment.

It is found in the membrane. This is an uncharacterized protein from Methanocaldococcus jannaschii (strain ATCC 43067 / DSM 2661 / JAL-1 / JCM 10045 / NBRC 100440) (Methanococcus jannaschii).